Consider the following 201-residue polypeptide: Single-stranded DNA-binding protein, mitochondrial (201 aa).

The 114-residue stretch at 71–184 (VHRAIICGKV…RDGKIRMIKY (114 aa)) folds into the SSB domain.

It is found in the mitochondrion. Its function is as follows. Binds to ss-DNA. The sequence is that of Single-stranded DNA-binding protein, mitochondrial from Arabidopsis thaliana (Mouse-ear cress).